The chain runs to 334 residues: Phospho-N-acetylmuramoyl-pentapeptide-transferase (334 aa).

A run of 9 helical transmembrane segments spans residues 5-25, 52-72, 81-101, 116-136, 148-168, 181-200, 230-250, 256-276, and 309-329; these read VVWL…PVTI, PTMG…VLLV, GLVV…DDFI, KILG…FKLG, GISF…VLLG, GLAS…LALV, VFMG…GAVV, LLVV…IQVI, and FWLL…DFWL.

Belongs to the glycosyltransferase 4 family. MraY subfamily. It depends on Mg(2+) as a cofactor.

It localises to the cell membrane. The catalysed reaction is UDP-N-acetyl-alpha-D-muramoyl-L-alanyl-gamma-D-glutamyl-meso-2,6-diaminopimeloyl-D-alanyl-D-alanine + di-trans,octa-cis-undecaprenyl phosphate = di-trans,octa-cis-undecaprenyl diphospho-N-acetyl-alpha-D-muramoyl-L-alanyl-D-glutamyl-meso-2,6-diaminopimeloyl-D-alanyl-D-alanine + UMP. It participates in cell wall biogenesis; peptidoglycan biosynthesis. Catalyzes the initial step of the lipid cycle reactions in the biosynthesis of the cell wall peptidoglycan: transfers peptidoglycan precursor phospho-MurNAc-pentapeptide from UDP-MurNAc-pentapeptide onto the lipid carrier undecaprenyl phosphate, yielding undecaprenyl-pyrophosphoryl-MurNAc-pentapeptide, known as lipid I. In Desulforamulus reducens (strain ATCC BAA-1160 / DSM 100696 / MI-1) (Desulfotomaculum reducens), this protein is Phospho-N-acetylmuramoyl-pentapeptide-transferase.